Reading from the N-terminus, the 63-residue chain is Cytochrome c oxidase subunit 7C, mitochondrial (63 aa).

The N-terminal 16 residues, 1 to 16 (MLGQSIRRFTTSVVRR), are a transit peptide targeting the mitochondrion. Topologically, residues 17–33 (SHYEEGPGKNIPFSVEN) are mitochondrial matrix. Lysine 25 is modified (N6-acetyllysine; alternate). Position 25 is an N6-succinyllysine; alternate (lysine 25). A helical membrane pass occupies residues 34–60 (KWRLLAMMTLFFGSGFAAPFFIVRHQL). Residues 61-63 (LKK) are Mitochondrial intermembrane-facing.

This sequence belongs to the cytochrome c oxidase VIIc family. In terms of assembly, component of the cytochrome c oxidase (complex IV, CIV), a multisubunit enzyme composed of 14 subunits. The complex is composed of a catalytic core of 3 subunits MT-CO1, MT-CO2 and MT-CO3, encoded in the mitochondrial DNA, and 11 supernumerary subunits COX4I1 (or COX4I2), COX5A, COX5B, COX6A2 (or COX6A1), COX6B1 (or COX6B2), COX6C, COX7A1 (or COX7A2), COX7B, COX7C, COX8B and NDUFA4, which are encoded in the nuclear genome. The complex exists as a monomer or a dimer and forms supercomplexes (SCs) in the inner mitochondrial membrane with NADH-ubiquinone oxidoreductase (complex I, CI) and ubiquinol-cytochrome c oxidoreductase (cytochrome b-c1 complex, complex III, CIII), resulting in different assemblies (supercomplex SCI(1)III(2)IV(1) and megacomplex MCI(2)III(2)IV(2)). Interacts with RAB5IF. As to expression, liver, heart, muscle and brain, contain the same isoform of COX VIIc, but at different concentrations.

It is found in the mitochondrion inner membrane. Its pathway is energy metabolism; oxidative phosphorylation. Its function is as follows. Component of the cytochrome c oxidase, the last enzyme in the mitochondrial electron transport chain which drives oxidative phosphorylation. The respiratory chain contains 3 multisubunit complexes succinate dehydrogenase (complex II, CII), ubiquinol-cytochrome c oxidoreductase (cytochrome b-c1 complex, complex III, CIII) and cytochrome c oxidase (complex IV, CIV), that cooperate to transfer electrons derived from NADH and succinate to molecular oxygen, creating an electrochemical gradient over the inner membrane that drives transmembrane transport and the ATP synthase. Cytochrome c oxidase is the component of the respiratory chain that catalyzes the reduction of oxygen to water. Electrons originating from reduced cytochrome c in the intermembrane space (IMS) are transferred via the dinuclear copper A center (CU(A)) of subunit 2 and heme A of subunit 1 to the active site in subunit 1, a binuclear center (BNC) formed by heme A3 and copper B (CU(B)). The BNC reduces molecular oxygen to 2 water molecules using 4 electrons from cytochrome c in the IMS and 4 protons from the mitochondrial matrix. This chain is Cytochrome c oxidase subunit 7C, mitochondrial (COX7C), found in Bos taurus (Bovine).